Reading from the N-terminus, the 364-residue chain is Aminomethyltransferase (364 aa).

It belongs to the GcvT family. The glycine cleavage system is composed of four proteins: P, T, L and H.

It carries out the reaction N(6)-[(R)-S(8)-aminomethyldihydrolipoyl]-L-lysyl-[protein] + (6S)-5,6,7,8-tetrahydrofolate = N(6)-[(R)-dihydrolipoyl]-L-lysyl-[protein] + (6R)-5,10-methylene-5,6,7,8-tetrahydrofolate + NH4(+). Functionally, the glycine cleavage system catalyzes the degradation of glycine. In Thermotoga sp. (strain RQ2), this protein is Aminomethyltransferase.